The chain runs to 971 residues: Translation initiation factor IF-2 (971 aa).

The segment covering 49-63 (HLRKSHGATDGDKRK) has biased composition (basic and acidic residues). 2 disordered regions span residues 49 to 86 (HLRK…ARTI) and 101 to 385 (DVAE…APTE). Over residues 105 to 114 (GAEQGQAQVA) the composition is skewed to low complexity. Over residues 121–177 (ELKRREEEARREAELLEKQAQELRERQERLEREEAERRAREEAAEAQRRRAEEEAAA) the composition is skewed to basic and acidic residues. Over residues 178 to 209 (KRAAAAAVEAQQVAAQQAAEAQQETAGAQSAQ) the composition is skewed to low complexity. A compositionally biased stretch (basic and acidic residues) spans 210 to 261 (DEARAAAERAAQREAAKKAEDAAREAADKTRAEQEEIRKRREAAEAEARAIR). Pro residues predominate over residues 277-286 (PPKPVEPPKP). A compositionally biased stretch (low complexity) spans 298-325 (KPAGASAARPAVKKPAGAAPATTAPAGA). The span at 355–368 (SSGGVDRGWRGGPK) shows a compositional bias: gly residues. Residues 471 to 640 (PRPPVVTVMG…LLQAEVLELK (170 aa)) enclose the tr-type G domain. Positions 480–487 (GHVDHGKT) are G1. GTP is bound at residue 480–487 (GHVDHGKT). Residues 505–509 (GITQH) form a G2 region. Residues 526 to 529 (DTPG) form a G3 region. GTP is bound by residues 526-530 (DTPGH) and 580-583 (NKID). Positions 580–583 (NKID) are G4. Residues 616-618 (SAK) form a G5 region.

Belongs to the TRAFAC class translation factor GTPase superfamily. Classic translation factor GTPase family. IF-2 subfamily.

Its subcellular location is the cytoplasm. One of the essential components for the initiation of protein synthesis. Protects formylmethionyl-tRNA from spontaneous hydrolysis and promotes its binding to the 30S ribosomal subunits. Also involved in the hydrolysis of GTP during the formation of the 70S ribosomal complex. This is Translation initiation factor IF-2 from Burkholderia ambifaria (strain ATCC BAA-244 / DSM 16087 / CCUG 44356 / LMG 19182 / AMMD) (Burkholderia cepacia (strain AMMD)).